A 177-amino-acid polypeptide reads, in one-letter code: dCTP deaminase, dUMP-forming (177 aa).

Residues 98-103 (RSSVGR), Asn110, 115-118 (DPGF), 123-125 (TLE), Gln144, 157-160 (YQGK), and Gln164 each bind dCTP. Catalysis depends on Glu125, which acts as the Proton donor/acceptor.

The protein belongs to the dCTP deaminase family. In terms of assembly, homotrimer. Mg(2+) is required as a cofactor.

The enzyme catalyses dCTP + 2 H2O = dUMP + NH4(+) + diphosphate. It participates in pyrimidine metabolism; dUMP biosynthesis; dUMP from dCTP: step 1/1. Its activity is regulated as follows. Inhibited by dTTP. Its function is as follows. Bifunctional enzyme that catalyzes both the deamination of dCTP to dUTP and the hydrolysis of dUTP to dUMP without releasing the toxic dUTP intermediate. This chain is dCTP deaminase, dUMP-forming, found in Halalkalibacterium halodurans (strain ATCC BAA-125 / DSM 18197 / FERM 7344 / JCM 9153 / C-125) (Bacillus halodurans).